The chain runs to 180 residues: Bifunctional protein PyrR (180 aa).

A PRPP-binding motif is present at residues 99 to 111 (VILVDDVLYTCRT).

The protein belongs to the purine/pyrimidine phosphoribosyltransferase family. PyrR subfamily. As to quaternary structure, homodimer and homohexamer; in equilibrium.

The catalysed reaction is UMP + diphosphate = 5-phospho-alpha-D-ribose 1-diphosphate + uracil. In terms of biological role, regulates transcriptional attenuation of the pyrimidine nucleotide (pyr) operon by binding in a uridine-dependent manner to specific sites on pyr mRNA. This disrupts an antiterminator hairpin in the RNA and favors formation of a downstream transcription terminator, leading to a reduced expression of downstream genes. Its function is as follows. Also displays a weak uracil phosphoribosyltransferase activity which is not physiologically significant. The chain is Bifunctional protein PyrR from Clostridium botulinum (strain Eklund 17B / Type B).